Consider the following 252-residue polypeptide: MNKVEVSVRKKLNNLPKVFLDIYLNKFTLDKNYINCVHYVSRSGLTQEGCVTGYTVGSMLKIDTLKEVKGIYYVPHPSIINITFRQKAIRNLDDLKQFLMSLDVSKISPRQPWLLVKYSNYSIEVFDIYFKGLIYEFPLLAEQGHLRIYSVPEPKDVYLLYYDNDGQKREINKELFTEVSEFMIFNHKVTFDKSILMFKNLYVTPGSGTLLYVPEDVHVKLESSDHKEVEVNVNRDTWLLFSHTRPRRSGQD.

This is an uncharacterized protein from Saccharolobus islandicus (Sulfolobus islandicus).